Here is a 310-residue protein sequence, read N- to C-terminus: Putative HTH-type transcriptional regulatory protein M1425_1284 (310 aa).

In terms of domain architecture, HTH cro/C1-type spans 125–180 (LKHKREEMGYSIGDVAKFLGVSRKAIYDYEKGDSDVSLEVAEKLIDLFGDDIIGDV). Residues 136-155 (IGDVAKFLGVSRKAIYDYEK) constitute a DNA-binding region (H-T-H motif).

The sequence is that of Putative HTH-type transcriptional regulatory protein M1425_1284 from Saccharolobus islandicus (strain M.14.25 / Kamchatka #1) (Sulfolobus islandicus).